Consider the following 476-residue polypeptide: Exoglucanase-6A (476 aa).

An N-terminal signal peptide occupies residues 1 to 16 (MAKFFLTAAFAAAALA). Disulfide bonds link C33-C50 and C44-C60. In terms of domain architecture, CBM1 spans 33 to 60 (CGGIGFNGPTCCQSGSTCVKQNDWYSQC). The interval 67-94 (TTTSTTSTSSSSTTSRATSTTRTGGVTS) is disordered. T144 is a glycosylation site (O-linked (Man...) threonine). A glycan (O-linked (Man...) serine) is linked at S153. Positions 163 and 165 each coordinate substrate. A glycan (N-linked (GlcNAc...) asparagine) is linked at N167. Residues 200 to 222 (YDLPDRDCAAAASNGEWAIANNG) form a substrate binding loop 1 region. D252 (proton donor) is an active-site residue. 6 residues coordinate substrate: H297, W300, N336, W397, K425, and E429. The substrate binding loop 2 stretch occupies residues 423-461 (WVKPGGECDGTSDTTAARYDYHCGLEDALKPAPEAGQWF). Residue D431 is the Proton acceptor of the active site.

Belongs to the glycosyl hydrolase 6 (cellulase A) family. In terms of assembly, monomer.

It carries out the reaction Hydrolysis of (1-&gt;4)-beta-D-glucosidic linkages in cellulose and cellotetraose, releasing cellobiose from the non-reducing ends of the chains.. Its function is as follows. Plays a central role in the recycling of plant biomass. The biological conversion of cellulose to glucose generally requires three types of hydrolytic enzymes: (1) Endoglucanases which cut internal beta-1,4-glucosidic bonds; (2) Exocellobiohydrolases that cut the disaccharide cellobiose from the non-reducing end of the cellulose polymer chain; (3) Beta-1,4-glucosidases which hydrolyze the cellobiose and other short cello-oligosaccharides to glucose. This Humicola insolens (Soft-rot fungus) protein is Exoglucanase-6A.